We begin with the raw amino-acid sequence, 320 residues long: Bifunctional phosphoglucose/phosphomannose isomerase (320 aa).

In terms of domain architecture, SIS spans 20–153 (IAKDLTPYKG…NLLGVDKDEL (134 aa)). Residues G37, S38, S80, S82, T85, and R132 each contribute to the D-fructose 6-phosphate site. E204 (proton acceptor) is an active-site residue. D-fructose 6-phosphate-binding residues include H220 and K313. H220 serves as the catalytic Proton donor. The active-site Proton acceptor is the K313.

The protein belongs to the PGI/PMI family. Homodimer.

The catalysed reaction is alpha-D-glucose 6-phosphate = beta-D-fructose 6-phosphate. The enzyme catalyses D-mannose 6-phosphate = D-fructose 6-phosphate. Dual specificity isomerase that catalyzes the isomerization of both glucose-6-phosphate and mannose-6-phosphate to fructose-6-phosphate. The chain is Bifunctional phosphoglucose/phosphomannose isomerase from Aquifex aeolicus (strain VF5).